The sequence spans 72 residues: Translation initiation factor IF-1 (72 aa).

The 72-residue stretch at 1–72 (MAKEESIEIE…TKGRITYRYK (72 aa)) folds into the S1-like domain.

It belongs to the IF-1 family. As to quaternary structure, component of the 30S ribosomal translation pre-initiation complex which assembles on the 30S ribosome in the order IF-2 and IF-3, IF-1 and N-formylmethionyl-tRNA(fMet); mRNA recruitment can occur at any time during PIC assembly.

The protein localises to the cytoplasm. Functionally, one of the essential components for the initiation of protein synthesis. Stabilizes the binding of IF-2 and IF-3 on the 30S subunit to which N-formylmethionyl-tRNA(fMet) subsequently binds. Helps modulate mRNA selection, yielding the 30S pre-initiation complex (PIC). Upon addition of the 50S ribosomal subunit IF-1, IF-2 and IF-3 are released leaving the mature 70S translation initiation complex. The chain is Translation initiation factor IF-1 from Chlorobium chlorochromatii (strain CaD3).